Here is a 336-residue protein sequence, read N- to C-terminus: Holliday junction branch migration complex subunit RuvB (336 aa).

Positions 1–183 are large ATPase domain (RuvB-L); the sequence is MTEEHLTSQE…FGIVEHMQYY (183 aa). ATP is bound by residues Leu-22, Arg-23, Gly-64, Lys-67, Thr-68, Thr-69, 130–132, Arg-173, Tyr-183, and Arg-220; that span reads EDF. Mg(2+) is bound at residue Thr-68. Residues 184-254 form a small ATPAse domain (RuvB-S) region; it reads QVEDLEKIIL…TTAMALKQLQ (71 aa). The tract at residues 257–336 is head domain (RuvB-H); the sequence is SAGLDQTDRK…LNLPLPGEEE (80 aa). Residues Arg-293 and Arg-317 each coordinate DNA.

Belongs to the RuvB family. As to quaternary structure, homohexamer. Forms an RuvA(8)-RuvB(12)-Holliday junction (HJ) complex. HJ DNA is sandwiched between 2 RuvA tetramers; dsDNA enters through RuvA and exits via RuvB. An RuvB hexamer assembles on each DNA strand where it exits the tetramer. Each RuvB hexamer is contacted by two RuvA subunits (via domain III) on 2 adjacent RuvB subunits; this complex drives branch migration. In the full resolvosome a probable DNA-RuvA(4)-RuvB(12)-RuvC(2) complex forms which resolves the HJ.

The protein resides in the cytoplasm. The enzyme catalyses ATP + H2O = ADP + phosphate + H(+). Functionally, the RuvA-RuvB-RuvC complex processes Holliday junction (HJ) DNA during genetic recombination and DNA repair, while the RuvA-RuvB complex plays an important role in the rescue of blocked DNA replication forks via replication fork reversal (RFR). RuvA specifically binds to HJ cruciform DNA, conferring on it an open structure. The RuvB hexamer acts as an ATP-dependent pump, pulling dsDNA into and through the RuvAB complex. RuvB forms 2 homohexamers on either side of HJ DNA bound by 1 or 2 RuvA tetramers; 4 subunits per hexamer contact DNA at a time. Coordinated motions by a converter formed by DNA-disengaged RuvB subunits stimulates ATP hydrolysis and nucleotide exchange. Immobilization of the converter enables RuvB to convert the ATP-contained energy into a lever motion, pulling 2 nucleotides of DNA out of the RuvA tetramer per ATP hydrolyzed, thus driving DNA branch migration. The RuvB motors rotate together with the DNA substrate, which together with the progressing nucleotide cycle form the mechanistic basis for DNA recombination by continuous HJ branch migration. Branch migration allows RuvC to scan DNA until it finds its consensus sequence, where it cleaves and resolves cruciform DNA. The sequence is that of Holliday junction branch migration complex subunit RuvB from Lactobacillus delbrueckii subsp. bulgaricus (strain ATCC 11842 / DSM 20081 / BCRC 10696 / JCM 1002 / NBRC 13953 / NCIMB 11778 / NCTC 12712 / WDCM 00102 / Lb 14).